A 143-amino-acid chain; its full sequence is MAKKIVGYIKLQVPAGKANPSPPIGPALGQRGLNIMEFCKAFNAKTQGMEPGLPIPVVITAFADKSFTFIMKTPPATVLIKKAIKLDKGSSKPHTDKVGTITRAQLEEIAKTKEPDLTAADMDAAVRTIAGTARSMGIVVEGV.

Belongs to the universal ribosomal protein uL11 family. Part of the ribosomal stalk of the 50S ribosomal subunit. Interacts with L10 and the large rRNA to form the base of the stalk. L10 forms an elongated spine to which L12 dimers bind in a sequential fashion forming a multimeric L10(L12)X complex. One or more lysine residues are methylated.

Forms part of the ribosomal stalk which helps the ribosome interact with GTP-bound translation factors. This chain is Large ribosomal subunit protein uL11, found in Thiobacillus denitrificans (strain ATCC 25259 / T1).